Reading from the N-terminus, the 375-residue chain is Succinyl-diaminopimelate desuccinylase (375 aa).

Residue His-66 participates in Zn(2+) binding. Asp-68 is a catalytic residue. Asp-99 lines the Zn(2+) pocket. Residue Glu-133 is the Proton acceptor of the active site. Glu-134, Glu-162, and His-348 together coordinate Zn(2+).

The protein belongs to the peptidase M20A family. DapE subfamily. As to quaternary structure, homodimer. Zn(2+) serves as cofactor. It depends on Co(2+) as a cofactor.

It carries out the reaction N-succinyl-(2S,6S)-2,6-diaminopimelate + H2O = (2S,6S)-2,6-diaminopimelate + succinate. It functions in the pathway amino-acid biosynthesis; L-lysine biosynthesis via DAP pathway; LL-2,6-diaminopimelate from (S)-tetrahydrodipicolinate (succinylase route): step 3/3. In terms of biological role, catalyzes the hydrolysis of N-succinyl-L,L-diaminopimelic acid (SDAP), forming succinate and LL-2,6-diaminopimelate (DAP), an intermediate involved in the bacterial biosynthesis of lysine and meso-diaminopimelic acid, an essential component of bacterial cell walls. The sequence is that of Succinyl-diaminopimelate desuccinylase from Erwinia tasmaniensis (strain DSM 17950 / CFBP 7177 / CIP 109463 / NCPPB 4357 / Et1/99).